Here is a 492-residue protein sequence, read N- to C-terminus: Zinc finger protein GLIS2 (492 aa).

The interval 49 to 101 (VITPICSSPPPGFRYRDGDSPPFSSPPIVDLSLSPPSGTDSPSRSSLSPDRAA) is disordered. Residues 69-129 (PPFSSPPIVD…SPFQFFLPLG (61 aa)) form a transcription activation region. Residues 82–97 (SPPSGTDSPSRSSLSP) are compositionally biased toward low complexity. A transcription repression region spans residues 138–161 (MFMSPPKENRLSLEFTEQKQLVCQ). The C2H2-type 1 zinc finger occupies 158–183 (LVCQWAKCNRLFELLQELVDHVNDFH). The C2H2-type 2; degenerate zinc-finger motif lies at 192–219 (YCCHWEGCARRGRGFNARYKMLIHIRTH). 3 consecutive C2H2-type zinc fingers follow at residues 225-247 (HCCPTCHKSFSRLENLKIHNRSH), 253-277 (YMCPYEGCNKRYSNSSDRFKHTRTH), and 283-307 (YYCKMPGCQKRYTDPSSLRKHIKAH). A compositionally biased stretch (basic and acidic residues) spans 423 to 444 (VENEKRPKGQRGDSSERTDGSK). The interval 423–450 (VENEKRPKGQRGDSSERTDGSKLRPGSI) is disordered.

Belongs to the GLI C2H2-type zinc-finger protein family.

It is found in the nucleus speckle. Its subcellular location is the cytoplasm. In terms of biological role, can act either as a transcription repressor or as a transcription activator, depending on the cell context. May be involved in neuron differentiation. The sequence is that of Zinc finger protein GLIS2 (glis2) from Xenopus laevis (African clawed frog).